The sequence spans 173 residues: Co-chaperone protein HscB (173 aa).

The 73-residue stretch at 2-74 folds into the J domain; that stretch reads DYFTLFGLPA…LKRAEYMLSL (73 aa).

This sequence belongs to the HscB family. As to quaternary structure, interacts with HscA and stimulates its ATPase activity. Interacts with IscU.

In terms of biological role, co-chaperone involved in the maturation of iron-sulfur cluster-containing proteins. Seems to help targeting proteins to be folded toward HscA. The polypeptide is Co-chaperone protein HscB (Photorhabdus laumondii subsp. laumondii (strain DSM 15139 / CIP 105565 / TT01) (Photorhabdus luminescens subsp. laumondii)).